The primary structure comprises 513 residues: E3 ubiquitin-protein ligase RNF25 (513 aa).

The region spanning 9-117 (SEIEVLQSIY…ERAKEILTDS (109 aa)) is the RWD domain. Zn(2+)-binding residues include C124, C127, C142, H144, H147, C150, C187, and C190. The RING-type; atypical zinc-finger motif lies at 124 to 191 (CVICLYDFKE…ELAVVCPVCR (68 aa)). Residues 261–513 (NLSDTPGMTD…EKEFRKEGVL (253 aa)) are disordered. A compositionally biased stretch (low complexity) spans 271–297 (SSGAESSQSLPSSSPDSTSTTQTSQNQ). Composition is skewed to polar residues over residues 345–397 (SDKI…QDML) and 406–423 (EVSQ…QTIL). Residues 426 to 440 (GHPEREHVGRGDKRG) are compositionally biased toward basic and acidic residues. Positions 482 to 498 (AGRGHRGGGAYRGGGRG) are enriched in gly residues. The segment covering 501 to 513 (QRVEKEFRKEGVL) has biased composition (basic and acidic residues).

This sequence belongs to the RNF25 family.

The protein localises to the cytoplasm. The enzyme catalyses S-ubiquitinyl-[E2 ubiquitin-conjugating enzyme]-L-cysteine + [acceptor protein]-L-lysine = [E2 ubiquitin-conjugating enzyme]-L-cysteine + N(6)-ubiquitinyl-[acceptor protein]-L-lysine.. It functions in the pathway protein modification; protein ubiquitination. Functionally, E3 ubiquitin-protein ligase that plays a key role in the RNF14-RNF25 translation quality control pathway, a pathway that takes place when a ribosome has stalled during translation, and which promotes ubiquitination and degradation of translation factors on stalled ribosomes. May also acts as a positive regulator of the Wnt signaling. This Danio rerio (Zebrafish) protein is E3 ubiquitin-protein ligase RNF25.